The primary structure comprises 279 residues: Ribonuclease T2 protein rnst-2 (279 aa).

The N-terminal stretch at 1-17 (MKLLLLLCISCIPLAYS) is a signal peptide. A disulfide bridge connects residues cysteine 37 and cysteine 48. Histidine 60 is a catalytic residue. Asparagine 68 carries N-linked (GlcNAc...) asparagine glycosylation. Residues glutamate 114 and histidine 118 contribute to the active site. Cysteine 200 and cysteine 210 are oxidised to a cystine.

It belongs to the RNase T2 family. As to expression, expressed in the pharynx, hypodermis, muscle cells, sheath cells, intestinal cells, the vulva and tail regions.

Its subcellular location is the lysosome. The catalysed reaction is a ribonucleotidyl-ribonucleotide-RNA + H2O = a 3'-end 3'-phospho-ribonucleotide-RNA + a 5'-end dephospho-ribonucleoside-RNA + H(+). Its function is as follows. Probable endoribonuclease involved in the autophagy-mediated degradation of ribosomal RNA and ribosomal proteins in lysosomes. The sequence is that of Ribonuclease T2 protein rnst-2 from Caenorhabditis elegans.